The primary structure comprises 623 residues: Stretch-activated cation channel MID1 (623 aa).

At 1–57 (MPAREVYLKRPATRRQLEGICTRYDGQQRITQLDCEEGCSKRTQPPQRLNPRYKSPD) the chain is on the extracellular side. A helical transmembrane segment spans residues 58 to 78 (LIHISFIIVLLCILSMTSSVV). Residues 79-623 (AQTTTGSSSS…DRWGNRWCNG (545 aa)) are Cytoplasmic-facing. A compositionally biased stretch (low complexity) spans 524 to 536 (TSTSSGTFPTPST). The disordered stretch occupies residues 524-544 (TSTSSGTFPTPSTVLRTPSSP). The interval 600 to 623 (SYGDGSAAQGVAAQDRWGNRWCNG) is required for targeting to the cell membrane.

Forms an oligomer by disulfide bonds. Interacts with CCH1 to form a Ca(2+) influx channel. Interacts (via C-terminus) with CCP1/cytochrome c peroxidase; the interaction may contribute to cellular detoxification of radicals.

Its subcellular location is the cell membrane. Calcium-permeable, cation-selective stretch-activated channel (SAC) that functions together with CCH1 to mediate calcium entry into cells. May additionally play a role in cellular detoxification of radicals. The sequence is that of Stretch-activated cation channel MID1 from Cryptococcus neoformans var. grubii serotype A (strain H99 / ATCC 208821 / CBS 10515 / FGSC 9487) (Filobasidiella neoformans var. grubii).